The chain runs to 123 residues: Large ribosomal subunit protein uL14 (123 aa).

Belongs to the universal ribosomal protein uL14 family. In terms of assembly, part of the 50S ribosomal subunit. Forms a cluster with proteins L3 and L19. In the 70S ribosome, L14 and L19 interact and together make contacts with the 16S rRNA in bridges B5 and B8.

Binds to 23S rRNA. Forms part of two intersubunit bridges in the 70S ribosome. This is Large ribosomal subunit protein uL14 from Enterobacter sp. (strain 638).